Consider the following 242-residue polypeptide: Small ribosomal subunit protein uS2 (242 aa).

Belongs to the universal ribosomal protein uS2 family.

This is Small ribosomal subunit protein uS2 from Mannheimia succiniciproducens (strain KCTC 0769BP / MBEL55E).